Reading from the N-terminus, the 135-residue chain is S-adenosylmethionine decarboxylase proenzyme (135 aa).

Ser63 acts as the Schiff-base intermediate with substrate; via pyruvic acid in catalysis. Ser63 is modified (pyruvic acid (Ser); by autocatalysis). His68 functions as the Proton acceptor; for processing activity in the catalytic mechanism. Residue Cys83 is the Proton donor; for catalytic activity of the active site.

Belongs to the prokaryotic AdoMetDC family. Type 1 subfamily. In terms of assembly, heterotetramer of two alpha and two beta chains arranged as a dimer of alpha/beta heterodimers. Pyruvate serves as cofactor. Is synthesized initially as an inactive proenzyme. Formation of the active enzyme involves a self-maturation process in which the active site pyruvoyl group is generated from an internal serine residue via an autocatalytic post-translational modification. Two non-identical subunits are generated from the proenzyme in this reaction, and the pyruvate is formed at the N-terminus of the alpha chain, which is derived from the carboxyl end of the proenzyme. The post-translation cleavage follows an unusual pathway, termed non-hydrolytic serinolysis, in which the side chain hydroxyl group of the serine supplies its oxygen atom to form the C-terminus of the beta chain, while the remainder of the serine residue undergoes an oxidative deamination to produce ammonia and the pyruvoyl group blocking the N-terminus of the alpha chain.

It catalyses the reaction S-adenosyl-L-methionine + H(+) = S-adenosyl 3-(methylsulfanyl)propylamine + CO2. It functions in the pathway amine and polyamine biosynthesis; S-adenosylmethioninamine biosynthesis; S-adenosylmethioninamine from S-adenosyl-L-methionine: step 1/1. Functionally, catalyzes the decarboxylation of S-adenosylmethionine to S-adenosylmethioninamine (dcAdoMet), the propylamine donor required for the synthesis of the polyamines spermine and spermidine from the diamine putrescine. The protein is S-adenosylmethionine decarboxylase proenzyme of Thermodesulfovibrio yellowstonii (strain ATCC 51303 / DSM 11347 / YP87).